Reading from the N-terminus, the 202-residue chain is Holliday junction branch migration complex subunit RuvA (202 aa).

A domain I region spans residues 1-64 (MIGRLRGSLA…EDAHLLYGFY (64 aa)). The segment at 65-143 (EKRERELFRE…AWESLPGTFT (79 aa)) is domain II. The interval 144-153 (LVSNGPNQAE) is flexible linker. The interval 154–202 (PVASAESDAVSALISLGYKPQEASKAVSAIKEKDLSSADLIRRALKGMG) is domain III.

It belongs to the RuvA family. Homotetramer. Forms an RuvA(8)-RuvB(12)-Holliday junction (HJ) complex. HJ DNA is sandwiched between 2 RuvA tetramers; dsDNA enters through RuvA and exits via RuvB. An RuvB hexamer assembles on each DNA strand where it exits the tetramer. Each RuvB hexamer is contacted by two RuvA subunits (via domain III) on 2 adjacent RuvB subunits; this complex drives branch migration. In the full resolvosome a probable DNA-RuvA(4)-RuvB(12)-RuvC(2) complex forms which resolves the HJ.

Its subcellular location is the cytoplasm. In terms of biological role, the RuvA-RuvB-RuvC complex processes Holliday junction (HJ) DNA during genetic recombination and DNA repair, while the RuvA-RuvB complex plays an important role in the rescue of blocked DNA replication forks via replication fork reversal (RFR). RuvA specifically binds to HJ cruciform DNA, conferring on it an open structure. The RuvB hexamer acts as an ATP-dependent pump, pulling dsDNA into and through the RuvAB complex. HJ branch migration allows RuvC to scan DNA until it finds its consensus sequence, where it cleaves and resolves the cruciform DNA. The chain is Holliday junction branch migration complex subunit RuvA from Pseudomonas savastanoi pv. phaseolicola (strain 1448A / Race 6) (Pseudomonas syringae pv. phaseolicola (strain 1448A / Race 6)).